A 423-amino-acid polypeptide reads, in one-letter code: Serine hydroxymethyltransferase (423 aa).

121–123 (GHI) lines the (6S)-5,6,7,8-tetrahydrofolate pocket. Lys227 bears the N6-(pyridoxal phosphate)lysine mark. Position 242 (Glu242) interacts with (6S)-5,6,7,8-tetrahydrofolate.

The protein belongs to the SHMT family. Homodimer. Pyridoxal 5'-phosphate serves as cofactor.

Its subcellular location is the cytoplasm. It carries out the reaction 5,10-methylenetetrahydromethanopterin + glycine + H2O = 5,6,7,8-tetrahydromethanopterin + L-serine. The protein operates within amino-acid biosynthesis; glycine biosynthesis; glycine from L-serine: step 1/1. Functionally, catalyzes the reversible interconversion of serine and glycine with tetrahydromethanopterin (H4MPT) serving as the one-carbon carrier. Also exhibits a pteridine-independent aldolase activity toward beta-hydroxyamino acids, producing glycine and aldehydes, via a retro-aldol mechanism. This Methanothermobacter marburgensis (strain ATCC BAA-927 / DSM 2133 / JCM 14651 / NBRC 100331 / OCM 82 / Marburg) (Methanobacterium thermoautotrophicum) protein is Serine hydroxymethyltransferase.